We begin with the raw amino-acid sequence, 242 residues long: Venom nerve growth factor 2 (242 aa).

Positions 1–18 (MSMLCYTLIIAFLIGIWA) are cleaved as a signal peptide. The propeptide occupies 19–125 (APKSEDNVPL…ALNRNIRSKR (107 aa)). Residues 46–69 (KALKTSRNTDQRHPAPKKAEDQEL) form a disordered region. Over residues 52–66 (RNTDQRHPAPKKAED) the composition is skewed to basic and acidic residues. 3 disulfide bridges follow: Cys139–Cys203, Cys181–Cys231, and Cys191–Cys233. A glycan (N-linked (GlcNAc...) asparagine) is linked at Asn147.

The protein belongs to the NGF-beta family. As to quaternary structure, homodimer; non-covalently linked. Expressed by the venom gland.

The protein localises to the secreted. Functionally, nerve growth factor is important for the development and maintenance of the sympathetic and sensory nervous systems. It stimulates division and differentiation of sympathetic and embryonic sensory neurons as well as basal forebrain cholinergic neurons in the brain. Its relevance in the snake venom is not clear. However, it has been shown to inhibit metalloproteinase-dependent proteolysis of platelet glycoprotein Ib alpha, suggesting a metalloproteinase inhibition to prevent metalloprotease autodigestion and/or protection against prey proteases. Binds a lipid between the two protein chains in the homodimer. The lipid-bound form promotes histamine relase from mouse mast cells, contrary to the lipid-free form. In Demansia vestigiata (Lesser black whip snake), this protein is Venom nerve growth factor 2.